The following is a 397-amino-acid chain: Nicotinate phosphoribosyltransferase (397 aa).

The residue at position 221 (H221) is a Phosphohistidine; by autocatalysis.

The protein belongs to the NAPRTase family. Transiently phosphorylated on a His residue during the reaction cycle. Phosphorylation strongly increases the affinity for substrates and increases the rate of nicotinate D-ribonucleotide production. Dephosphorylation regenerates the low-affinity form of the enzyme, leading to product release.

It catalyses the reaction nicotinate + 5-phospho-alpha-D-ribose 1-diphosphate + ATP + H2O = nicotinate beta-D-ribonucleotide + ADP + phosphate + diphosphate. It participates in cofactor biosynthesis; NAD(+) biosynthesis; nicotinate D-ribonucleotide from nicotinate: step 1/1. Functionally, catalyzes the synthesis of beta-nicotinate D-ribonucleotide from nicotinate and 5-phospho-D-ribose 1-phosphate at the expense of ATP. The chain is Nicotinate phosphoribosyltransferase from Herminiimonas arsenicoxydans.